The primary structure comprises 348 residues: Major outer membrane protein P.IB (348 aa).

A signal peptide spans 1 to 19 (MKKSLIALTLAALPVAATA).

This sequence belongs to the Gram-negative porin family. In terms of assembly, homotrimer.

Its subcellular location is the cell outer membrane. Its function is as follows. Serves as a slightly cation selective porin. Major antigen on the gonococcal cell surface and it may have pathogenic properties in addition to its porin activity. This is Major outer membrane protein P.IB (porB) from Neisseria gonorrhoeae.